Here is a 239-residue protein sequence, read N- to C-terminus: MRLDYLSIFPAYFDVLDISLLGKAAVNGLVEVHAHDLRDWTHDRHRTVDDTPCGGGAGMVMKPDPWGEAFDEIIGTEPDSSVHVIFPSPSGAPFTQSAAQELSSAVRIVFCCGRYEGIDHRVIDYARSMWTVHEVSLGDYVLNGGEVAALAITEAVVRLVPGFMGNPESLAEESFSAGQDGLLEYPLFTRPVSWRGLDVPEVLMSGHHGRIAKWRRDESVRLTCERRPDLTDSDFGVPH.

S-adenosyl-L-methionine is bound by residues Gly113 and 137 to 142 (LGDYVL).

It belongs to the RNA methyltransferase TrmD family. Homodimer.

It is found in the cytoplasm. The catalysed reaction is guanosine(37) in tRNA + S-adenosyl-L-methionine = N(1)-methylguanosine(37) in tRNA + S-adenosyl-L-homocysteine + H(+). Its function is as follows. Specifically methylates guanosine-37 in various tRNAs. This is tRNA (guanine-N(1)-)-methyltransferase from Cutibacterium acnes (strain DSM 16379 / KPA171202) (Propionibacterium acnes).